The following is a 482-amino-acid chain: FAD-dependent monooxygenase esdpE (482 aa).

The signal sequence occupies residues 1-21; that stretch reads MGAERLKVIIVGGSIAGLTLA. Residues glutamate 35 and arginine 108 each contribute to the FAD site. N-linked (GlcNAc...) asparagine glycosylation occurs at asparagine 243. Positions 308 and 321 each coordinate FAD. A helical transmembrane segment spans residues 440–460; it reads LFSGSLLLIMSVALLFGVICW.

The protein belongs to the paxM FAD-dependent monooxygenase family. Requires FAD as cofactor.

Its subcellular location is the membrane. The protein operates within secondary metabolite biosynthesis; terpenoid biosynthesis. Its function is as follows. FAD-dependent monooxygenase; part of the cluster that mediates the biosynthesis of shearones, diterpenoid pyrones (DPs) which are structurally diverse meroterpenoids consisting of a diterpene linked by a pyrone, and which may exhibit a range of bioactivities. Within the pathway, esdpE takes part to the biosynthesis of the molecular scaffold by catalyzing the formation of an (S)-epoxide ring at the terminal olefin of the geranylgeranyl group. The molecular scaffold is commonly biosynthesized by a series of enzymes including the non-reducing polyketide synthase (NR-PKS) esdpA that generates an alpha-pyrone; the prenyltransferase esdpC that attaches a geranylgeranyl pyrophosphate (GGPP) produced by the GGPP synthase (GGPPS) esdpD onto the pyrone unit; the FAD-dependent monooxygenase esdpE that converts an olefin on the diterpene unit into an epoxide; and the terpene cyclase esdpB that catalyzes the cyclization reactions to give the molecular backbone shearone A. In the modification steps, esdpF oxidizes the hydroxy group to a ketone at C-3 and esdpG then attaches hydroxy groups at both C-11 and C-12. After that, esdpI hydroxylates at C-20 and esdpH hydroxylates at C-6'. The ether bridge is generated by nucleophilic attack of the hydroxy group at C-20 to the carbonyl carbon at C-3. EsdpH can also functions prior to esdpI. The different combinations of these modification enzymes lead to the production of diverse shearone derivatives, shearone I being the end product of the pathway. The alpha-ketoglutarate-dependent dioxygenase esdpJ seems not to be involved in this pathway. This Penicillium shearii (Eupenicillium shearii) protein is FAD-dependent monooxygenase esdpE.